Consider the following 230-residue polypeptide: Biosynthetic peptidoglycan transglycosylase (230 aa).

The chain crosses the membrane as a helical span at residues 10–30; sequence IFLFFIAVIFVYQFWIFSQIV.

It belongs to the glycosyltransferase 51 family.

Its subcellular location is the cell inner membrane. The catalysed reaction is [GlcNAc-(1-&gt;4)-Mur2Ac(oyl-L-Ala-gamma-D-Glu-L-Lys-D-Ala-D-Ala)](n)-di-trans,octa-cis-undecaprenyl diphosphate + beta-D-GlcNAc-(1-&gt;4)-Mur2Ac(oyl-L-Ala-gamma-D-Glu-L-Lys-D-Ala-D-Ala)-di-trans,octa-cis-undecaprenyl diphosphate = [GlcNAc-(1-&gt;4)-Mur2Ac(oyl-L-Ala-gamma-D-Glu-L-Lys-D-Ala-D-Ala)](n+1)-di-trans,octa-cis-undecaprenyl diphosphate + di-trans,octa-cis-undecaprenyl diphosphate + H(+). The protein operates within cell wall biogenesis; peptidoglycan biosynthesis. Its function is as follows. Peptidoglycan polymerase that catalyzes glycan chain elongation from lipid-linked precursors. The chain is Biosynthetic peptidoglycan transglycosylase from Nitrosospira multiformis (strain ATCC 25196 / NCIMB 11849 / C 71).